A 181-amino-acid chain; its full sequence is UPF0398 protein LMOf2365_1918 (181 aa).

The protein belongs to the UPF0398 family.

This chain is UPF0398 protein LMOf2365_1918, found in Listeria monocytogenes serotype 4b (strain F2365).